The sequence spans 548 residues: DNA ligase (548 aa).

Position 244 (Glu-244) interacts with ATP. The active-site N6-AMP-lysine intermediate is Lys-246. ATP contacts are provided by Arg-251, Arg-266, Glu-295, Phe-334, Arg-405, and Lys-411.

This sequence belongs to the ATP-dependent DNA ligase family. Requires Mg(2+) as cofactor.

It carries out the reaction ATP + (deoxyribonucleotide)n-3'-hydroxyl + 5'-phospho-(deoxyribonucleotide)m = (deoxyribonucleotide)n+m + AMP + diphosphate.. DNA ligase that seals nicks in double-stranded DNA during DNA replication, DNA recombination and DNA repair. This Methanoculleus marisnigri (strain ATCC 35101 / DSM 1498 / JR1) protein is DNA ligase.